Reading from the N-terminus, the 382-residue chain is Protein shisa-9A (382 aa).

A signal peptide spans 1 to 26 (MKWTVLLLEYFLVKVLVLLYSADGEA). The Extracellular portion of the chain corresponds to 27–132 (QQLEGFIMLS…DPRHDPTKDK (106 aa)). Asn39 carries N-linked (GlcNAc...) asparagine glycosylation. Residues 133–153 (TNLIVYIICGVVAIMALVGIF) form a helical membrane-spanning segment. Residues 154–382 (TKLGLEKAHR…VTNSKAEVTV (229 aa)) lie on the Cytoplasmic side of the membrane.

Belongs to the shisa family. SHISA9 subfamily. As to quaternary structure, component of some AMPA receptors (ionotropic glutamate receptors) complex.

The protein localises to the cell projection. It is found in the dendritic spine membrane. Its subcellular location is the synapse. In terms of biological role, regulator of short-term neuronal synaptic plasticity in the dentate gyrus. Associates with AMPA receptors (ionotropic glutamate receptors) in synaptic spines and promotes AMPA receptor desensitization at excitatory synapses. In Danio rerio (Zebrafish), this protein is Protein shisa-9A (shisa9a).